The primary structure comprises 130 residues: MASVKLASLIVLFATLGMFLTKNVGAASCNGVCSPFEMPPCGTSACRCIPVGLFIGYCRNPSGVFLKANDEHPNLCESDADCRKKGSGNFCGHYPNPDIEYGWCFASKSEAEDFFSKITPKDLLKSVSTA.

Positions 1-26 (MASVKLASLIVLFATLGMFLTKNVGA) are cleaved as a signal peptide. 3 cysteine pairs are disulfide-bonded: cysteine 29-cysteine 46, cysteine 33-cysteine 48, and cysteine 41-cysteine 58. 2 consecutive propeptides follow at residues 64-69 (VFLKAN) and 123-130 (LLKSVSTA).

The C-terminal glycine may be removed from PA1b. Major component of both the cotyledons and embryonic axes of mature seeds.

Its function is as follows. PA1b binds to basic 7S globulin (BG) and stimulates its phosphorylation activity. Involved in the signal transduction system to regulate the growth and differentiation as a hormone peptide. Toxic to various insects through binding to a high affinity binding site in the insect gut. This is Albumin-1 D from Pisum sativum (Garden pea).